The primary structure comprises 250 residues: ATP synthase subunit a (250 aa).

Transmembrane regions (helical) follow at residues 26–46 (FTNA…FLYF), 84–104 (FFPL…LGMF), 114–134 (IIVT…YGFY), 143–163 (VFVP…IEII), 193–213 (FVAS…LPLI), and 216–236 (VALT…FAVL).

It belongs to the ATPase A chain family. In terms of assembly, F-type ATPases have 2 components, CF(1) - the catalytic core - and CF(0) - the membrane proton channel. CF(1) has five subunits: alpha(3), beta(3), gamma(1), delta(1), epsilon(1). CF(0) has three main subunits: a(1), b(2) and c(9-12). The alpha and beta chains form an alternating ring which encloses part of the gamma chain. CF(1) is attached to CF(0) by a central stalk formed by the gamma and epsilon chains, while a peripheral stalk is formed by the delta and b chains.

It localises to the cell inner membrane. Functionally, key component of the proton channel; it plays a direct role in the translocation of protons across the membrane. The polypeptide is ATP synthase subunit a (Rhizobium etli (strain ATCC 51251 / DSM 11541 / JCM 21823 / NBRC 15573 / CFN 42)).